We begin with the raw amino-acid sequence, 353 residues long: MKLTDNEEITMNGTREMETTEQETSSPCSLVIEAFPVKKSIIVGYALTSKKIKSFLQPKLEGLARNKGILFVAIDQNKPLSEQGPFDIVLHKQIGKEWRRILEEFRLAHPDVTVLDPPDAILHLRNRQSMLQCVADMNLSDSNGRVGVPKQLVIKKDASSIPEAVNNAGLRLPLVAKPLVADGSAKSHELSLAYDQHSLLKLEPPLVLQEFVNHGGVLFKVYIVGEAIRVVRRFSLPDVSRRELPKSAGVFRFPRVSCAAASADDADLDPSIAELPPRPLLERLAKELRRGLGLRLFNLDIIREHGTRDRFYVIDINYFPGYGKMPEYEHVFTDFLLSVVQSQCKKRALADQY.

Positions 1 to 25 (MKLTDNEEITMNGTREMETTEQETS) are disordered. 2 residues coordinate 1D-myo-inositol 1,3,4-trisphosphate: lysine 50 and lysine 92. 2 residues coordinate ATP: arginine 127 and lysine 177. An ATP-grasp domain is found at 138–350 (NLSDSNGRVG…QSQCKKRALA (213 aa)). Histidine 188 and lysine 220 together coordinate 1D-myo-inositol 1,3,4-trisphosphate. ATP-binding positions include 209-220 (QEFVNHGGVLFK) and serine 235. Aspartate 300, aspartate 315, and asparagine 317 together coordinate Mg(2+). Asparagine 317 contributes to the 1D-myo-inositol 1,3,4-trisphosphate binding site.

It belongs to the ITPK1 family. As to quaternary structure, monomer. Mg(2+) is required as a cofactor. In terms of tissue distribution, highly expressed in leaves and flowers, and at lower levels in roots, stems, cauline leaves and siliques.

It carries out the reaction 1D-myo-inositol 3,4,5,6-tetrakisphosphate + ATP = 1D-myo-inositol 1,3,4,5,6-pentakisphosphate + ADP + H(+). The catalysed reaction is 1D-myo-inositol 1,3,4-trisphosphate + ATP = 1D-myo-inositol 1,3,4,5-tetrakisphosphate + ADP + H(+). It catalyses the reaction 1D-myo-inositol 1,3,4-trisphosphate + ATP = 1D-myo-inositol 1,3,4,6-tetrakisphosphate + ADP + H(+). Its function is as follows. Kinase that can phosphorylate various inositol polyphosphate such as Ins(3,4,5,6)P4 or Ins(1,3,4)P3. Phosphorylates Ins(3,4,5,6)P4 to form InsP5. This reaction is thought to have regulatory importance, since Ins(3,4,5,6)P4 is an inhibitor of plasma membrane Ca(2+)-activated Cl(-) channels, while Ins(1,3,4,5,6)P5 is not. Also phosphorylates Ins(1,3,4)P3 or a racemic mixture of Ins(1,4,6)P3 and Ins(3,4,6)P3 to form InsP4. Ins(1,3,4,6)P4 is an essential molecule in the hexakisphosphate (InsP6) pathway. This is Inositol-tetrakisphosphate 1-kinase 3 (ITPK3) from Arabidopsis thaliana (Mouse-ear cress).